The chain runs to 321 residues: Probable proline iminopeptidase (321 aa).

In terms of domain architecture, AB hydrolase-1 spans 35–296 (KPVVFLHGGP…IVVPDAGHSM (262 aa)). Catalysis depends on S110, which acts as the Nucleophile. Residue D266 is part of the active site. Catalysis depends on H294, which acts as the Proton donor.

Belongs to the peptidase S33 family.

Its subcellular location is the cytoplasm. The catalysed reaction is Release of N-terminal proline from a peptide.. Specifically catalyzes the removal of N-terminal proline residues from peptides. The sequence is that of Probable proline iminopeptidase (pip) from Leptolyngbya boryana (Plectonema boryanum).